The primary structure comprises 372 residues: Glutamate 5-kinase (372 aa).

Lys-14 lines the ATP pocket. Substrate is bound by residues Ser-54, Asp-141, and Asn-153. Residue 173–174 (TD) participates in ATP binding. Residues 280-358 (RGRVIIDAGA…SEIESVLGHL (79 aa)) enclose the PUA domain.

It belongs to the glutamate 5-kinase family.

The protein localises to the cytoplasm. It carries out the reaction L-glutamate + ATP = L-glutamyl 5-phosphate + ADP. The protein operates within amino-acid biosynthesis; L-proline biosynthesis; L-glutamate 5-semialdehyde from L-glutamate: step 1/2. In terms of biological role, catalyzes the transfer of a phosphate group to glutamate to form L-glutamate 5-phosphate. The sequence is that of Glutamate 5-kinase from Cupriavidus metallidurans (strain ATCC 43123 / DSM 2839 / NBRC 102507 / CH34) (Ralstonia metallidurans).